The following is a 415-amino-acid chain: uncharacterized protein (415 aa).

Disordered regions lie at residues 329-351 (KFNK…TESS) and 388-415 (KSMM…IITL). The span at 338–348 (LQNESGDDSET) shows a compositional bias: acidic residues. Residues 399 to 409 (KSNRKSNKRSN) are compositionally biased toward basic residues.

This is an uncharacterized protein from Acanthamoeba polyphaga mimivirus (APMV).